Here is a 333-residue protein sequence, read N- to C-terminus: 4-hydroxy-2-oxovalerate aldolase (333 aa).

The Pyruvate carboxyltransferase domain occupies 3–253 (ILINDSTLRD…NTGIDLYHFL (251 aa)). Substrate is bound at residue 11 to 12 (RD). Asp12 is a binding site for Mn(2+). Catalysis depends on His15, which acts as the Proton acceptor. Ser165 and His192 together coordinate substrate. Residues His192 and His194 each contribute to the Mn(2+) site.

Belongs to the 4-hydroxy-2-oxovalerate aldolase family. In terms of assembly, interacts with MhpF.

It carries out the reaction (S)-4-hydroxy-2-oxopentanoate = acetaldehyde + pyruvate. It participates in aromatic compound metabolism; 3-phenylpropanoate degradation. Catalyzes the retro-aldol cleavage of 4-hydroxy-2-oxopentanoate to pyruvate and acetaldehyde. Is involved in the meta-cleavage pathway for the degradation of aromatic compounds. The sequence is that of 4-hydroxy-2-oxovalerate aldolase from Serratia proteamaculans (strain 568).